A 248-amino-acid chain; its full sequence is Triosephosphate isomerase (248 aa).

Substrate contacts are provided by N11 and K13. The Electrophile role is filled by H95. E165 functions as the Proton acceptor in the catalytic mechanism.

It belongs to the triosephosphate isomerase family. In terms of assembly, homodimer.

It is found in the cytoplasm. The enzyme catalyses dihydroxyacetone phosphate = methylglyoxal + phosphate. It catalyses the reaction D-glyceraldehyde 3-phosphate = dihydroxyacetone phosphate. It participates in carbohydrate degradation; glycolysis; D-glyceraldehyde 3-phosphate from glycerone phosphate: step 1/1. The protein operates within carbohydrate biosynthesis; gluconeogenesis. Triosephosphate isomerase is an extremely efficient metabolic enzyme that catalyzes the interconversion between dihydroxyacetone phosphate (DHAP) and D-glyceraldehyde-3-phosphate (G3P) in glycolysis and gluconeogenesis. Its function is as follows. It is also responsible for the non-negligible production of methylglyoxal a reactive cytotoxic side-product that modifies and can alter proteins, DNA and lipids. The sequence is that of Triosephosphate isomerase (tpi1) from Xenopus laevis (African clawed frog).